The primary structure comprises 540 residues: Phosphoenolpyruvate carboxykinase (ATP) (540 aa).

Arginine 65 provides a ligand contact to substrate. Lysine 87 carries the N6-acetyllysine modification. Tyrosine 207 and lysine 213 together coordinate substrate. Residues lysine 213, histidine 232, and 248-256 each bind ATP; that span reads GLSGTGKTT. Mn(2+)-binding residues include lysine 213 and histidine 232. Position 269 (aspartate 269) interacts with Mn(2+). Residues glutamate 297, arginine 333, 449–450, and threonine 455 contribute to the ATP site; that span reads RI. Substrate is bound at residue arginine 333. Lysine 523 carries the post-translational modification N6-acetyllysine.

It belongs to the phosphoenolpyruvate carboxykinase (ATP) family. Monomer. Mn(2+) is required as a cofactor.

It localises to the cytoplasm. The catalysed reaction is oxaloacetate + ATP = phosphoenolpyruvate + ADP + CO2. It functions in the pathway carbohydrate biosynthesis; gluconeogenesis. Involved in the gluconeogenesis. Catalyzes the conversion of oxaloacetate (OAA) to phosphoenolpyruvate (PEP) through direct phosphoryl transfer between the nucleoside triphosphate and OAA. This chain is Phosphoenolpyruvate carboxykinase (ATP), found in Shigella dysenteriae serotype 1 (strain Sd197).